A 320-amino-acid polypeptide reads, in one-letter code: Adhesin MafA 1/4 (320 aa).

A signal peptide spans 1–18 (MRARLLIPILFSVFILSA). Cys19 carries N-palmitoyl cysteine lipidation. The S-diacylglycerol cysteine moiety is linked to residue Cys19. A disordered region spans residues 287 to 320 (NHTGNSAPSVEADNSHEGYGYSDEAVRQHRQGQP).

This sequence belongs to the MafA family.

It is found in the cell outer membrane. The chain is Adhesin MafA 1/4 (mafA1) from Neisseria gonorrhoeae (strain ATCC 700825 / FA 1090).